A 123-amino-acid polypeptide reads, in one-letter code: uncharacterized protein (123 aa).

The segment at 35–100 is disordered; the sequence is SQDHGDDPAE…SSGAPASQHC (66 aa). Over residues 37–48 the composition is skewed to basic and acidic residues; the sequence is DHGDDPAERGRT. Low complexity predominate over residues 85 to 97; sequence ALPASPSSGAPAS.

This is an uncharacterized protein from Homo sapiens (Human).